Reading from the N-terminus, the 170-residue chain is Cyclic pyranopterin monophosphate synthase (170 aa).

Substrate-binding positions include 89–91 (LCH) and 125–126 (ME). The active site involves Asp140.

Belongs to the MoaC family. In terms of assembly, homohexamer; trimer of dimers.

The enzyme catalyses (8S)-3',8-cyclo-7,8-dihydroguanosine 5'-triphosphate = cyclic pyranopterin phosphate + diphosphate. The protein operates within cofactor biosynthesis; molybdopterin biosynthesis. In terms of biological role, catalyzes the conversion of (8S)-3',8-cyclo-7,8-dihydroguanosine 5'-triphosphate to cyclic pyranopterin monophosphate (cPMP). This chain is Cyclic pyranopterin monophosphate synthase, found in Streptomyces avermitilis (strain ATCC 31267 / DSM 46492 / JCM 5070 / NBRC 14893 / NCIMB 12804 / NRRL 8165 / MA-4680).